Consider the following 305-residue polypeptide: Autophagy-related protein 27 (305 aa).

The signal sequence occupies residues 1-22 (MARYKGLSILSLFAVFSSLASA). At 23-242 (ELDCSNIKVD…EDGGSAPSGH (220 aa)) the chain is on the lumenal side. Residues 24-231 (LDCSNIKVDG…EWKTKYACEN (208 aa)) form the MRH domain. Cystine bridges form between C26–C66 and C74–C81. A glycan (N-linked (GlcNAc...) asparagine) is linked at N58. N-linked (GlcNAc...) asparagine glycosylation occurs at N85. C156 and C229 form a disulfide bridge. The disordered stretch occupies residues 163-202 (LEGLESPKPDGDKKKDGEKKDDDKKDNKDKEGKSKRDGEE). The chain crosses the membrane as a helical span at residues 243–263 (WGFFTWVIVLYVVLVSLPLLS). Over 264-305 (ERVTNVRCHSQPVPVHFGLSDIRLVAQLQPVWSSRVGLASSQ) the chain is Cytoplasmic.

This sequence belongs to the ATG27 family.

It localises to the cytoplasmic vesicle membrane. The protein resides in the golgi apparatus membrane. It is found in the mitochondrion membrane. The protein localises to the preautophagosomal structure membrane. Effector of phosphatidylinositol 3-phosphate kinase signaling. Regulates the cytoplasm to vacuole transport (Cvt) vesicle formation. Plays a role in ATG protein retrieval from the pre-autophagosomal structure (PAS). The sequence is that of Autophagy-related protein 27 from Arthroderma benhamiae (strain ATCC MYA-4681 / CBS 112371) (Trichophyton mentagrophytes).